The primary structure comprises 209 residues: Octanoyltransferase (209 aa).

A BPL/LPL catalytic domain is found at 30 to 209 (DHEPEIIYLV…IQTEFNKIFK (180 aa)). Substrate-binding positions include 69–76 (RGGKFTFH), 143–145 (AIG), and 156–158 (GVA). The active-site Acyl-thioester intermediate is Cys174.

It belongs to the LipB family.

It localises to the cytoplasm. The catalysed reaction is octanoyl-[ACP] + L-lysyl-[protein] = N(6)-octanoyl-L-lysyl-[protein] + holo-[ACP] + H(+). Its pathway is protein modification; protein lipoylation via endogenous pathway; protein N(6)-(lipoyl)lysine from octanoyl-[acyl-carrier-protein]: step 1/2. Functionally, catalyzes the transfer of endogenously produced octanoic acid from octanoyl-acyl-carrier-protein onto the lipoyl domains of lipoate-dependent enzymes. Lipoyl-ACP can also act as a substrate although octanoyl-ACP is likely to be the physiological substrate. The chain is Octanoyltransferase from Rickettsia peacockii (strain Rustic).